We begin with the raw amino-acid sequence, 373 residues long: Cytoplasmic tRNA 2-thiolation protein 1 (373 aa).

The protein belongs to the TtcA family. CTU1/NCS6/ATPBD3 subfamily.

Its subcellular location is the cytoplasm. It functions in the pathway tRNA modification; 5-methoxycarbonylmethyl-2-thiouridine-tRNA biosynthesis. In terms of biological role, plays a central role in 2-thiolation of mcm(5)S(2)U at tRNA wobble positions of tRNA(Lys), tRNA(Glu) and tRNA(Gln). Directly binds tRNAs and probably acts by catalyzing adenylation of tRNAs, an intermediate required for 2-thiolation. It is unclear whether it acts as a sulfurtransferase that transfers sulfur from thiocarboxylated URM1 onto the uridine of tRNAs at wobble position. Prior mcm(5) tRNA modification by the elongator complex is required for 2-thiolation. May also be involved in protein urmylation. The protein is Cytoplasmic tRNA 2-thiolation protein 1 of Malassezia globosa (strain ATCC MYA-4612 / CBS 7966) (Dandruff-associated fungus).